Reading from the N-terminus, the 96-residue chain is Co-chaperonin GroES (96 aa).

The protein belongs to the GroES chaperonin family. Heptamer of 7 subunits arranged in a ring. Interacts with the chaperonin GroEL.

The protein resides in the cytoplasm. Functionally, together with the chaperonin GroEL, plays an essential role in assisting protein folding. The GroEL-GroES system forms a nano-cage that allows encapsulation of the non-native substrate proteins and provides a physical environment optimized to promote and accelerate protein folding. GroES binds to the apical surface of the GroEL ring, thereby capping the opening of the GroEL channel. The sequence is that of Co-chaperonin GroES from Alteromonas mediterranea (strain DSM 17117 / CIP 110805 / LMG 28347 / Deep ecotype).